Consider the following 215-residue polypeptide: Ribosomal RNA small subunit methyltransferase G (215 aa).

S-adenosyl-L-methionine contacts are provided by residues Gly77, Phe82, Ile130–Glu131, and Arg146.

This sequence belongs to the methyltransferase superfamily. RNA methyltransferase RsmG family.

It localises to the cytoplasm. The catalysed reaction is guanosine(527) in 16S rRNA + S-adenosyl-L-methionine = N(7)-methylguanosine(527) in 16S rRNA + S-adenosyl-L-homocysteine. Specifically methylates the N7 position of guanine in position 527 of 16S rRNA. This Bartonella henselae (strain ATCC 49882 / DSM 28221 / CCUG 30454 / Houston 1) (Rochalimaea henselae) protein is Ribosomal RNA small subunit methyltransferase G.